The chain runs to 750 residues: Photosystem I P700 chlorophyll a apoprotein A1 (750 aa).

A run of 8 helical transmembrane segments spans residues valine 70 to alanine 93, leucine 156 to histidine 179, leucine 195 to leucine 219, isoleucine 291 to tyrosine 309, tryptophan 346 to tyrosine 369, leucine 385 to valine 411, alanine 433 to histidine 455, and phenylalanine 531 to leucine 549. Positions 573 and 582 each coordinate [4Fe-4S] cluster. 2 helical membrane-spanning segments follow: residues histidine 589–tryptophan 610 and leucine 664–phenylalanine 686. Residue histidine 675 participates in chlorophyll a' binding. Chlorophyll a is bound by residues methionine 683 and tyrosine 691. Tryptophan 692 serves as a coordination point for phylloquinone. The helical transmembrane segment at alanine 724 to alanine 744 threads the bilayer.

This sequence belongs to the PsaA/PsaB family. The PsaA/B heterodimer binds the P700 chlorophyll special pair and subsequent electron acceptors. PSI consists of a core antenna complex that captures photons, and an electron transfer chain that converts photonic excitation into a charge separation. The eukaryotic PSI reaction center is composed of at least 11 subunits. Requires P700 is a chlorophyll a/chlorophyll a' dimer, A0 is one or more chlorophyll a, A1 is one or both phylloquinones and FX is a shared 4Fe-4S iron-sulfur center. as cofactor.

The protein localises to the plastid. The protein resides in the chloroplast thylakoid membrane. The enzyme catalyses reduced [plastocyanin] + hnu + oxidized [2Fe-2S]-[ferredoxin] = oxidized [plastocyanin] + reduced [2Fe-2S]-[ferredoxin]. Its function is as follows. PsaA and PsaB bind P700, the primary electron donor of photosystem I (PSI), as well as the electron acceptors A0, A1 and FX. PSI is a plastocyanin-ferredoxin oxidoreductase, converting photonic excitation into a charge separation, which transfers an electron from the donor P700 chlorophyll pair to the spectroscopically characterized acceptors A0, A1, FX, FA and FB in turn. Oxidized P700 is reduced on the lumenal side of the thylakoid membrane by plastocyanin. The chain is Photosystem I P700 chlorophyll a apoprotein A1 from Daucus carota (Wild carrot).